The chain runs to 152 residues: Deoxyuridine 5'-triphosphate nucleotidohydrolase (152 aa).

Residues 71-73 (RSG), Asn-84, 88-90 (LID), and Met-98 contribute to the substrate site.

Belongs to the dUTPase family. Mg(2+) serves as cofactor.

It catalyses the reaction dUTP + H2O = dUMP + diphosphate + H(+). It functions in the pathway pyrimidine metabolism; dUMP biosynthesis; dUMP from dCTP (dUTP route): step 2/2. Its function is as follows. This enzyme is involved in nucleotide metabolism: it produces dUMP, the immediate precursor of thymidine nucleotides and it decreases the intracellular concentration of dUTP so that uracil cannot be incorporated into DNA. The chain is Deoxyuridine 5'-triphosphate nucleotidohydrolase from Shewanella pealeana (strain ATCC 700345 / ANG-SQ1).